Reading from the N-terminus, the 581-residue chain is Putative protein phosphatase 2C 22 (581 aa).

Positions 1 to 21 are cleaved as a signal peptide; it reads MVISVPLFSSVLLALVVAVPA. The region spanning 102–478 is the PPM-type phosphatase domain; sequence KYASSAMQGL…NNATAILVQF (377 aa). Asp138, Gly139, Asp373, and Asn469 together coordinate Mn(2+). The tract at residues 538–563 is disordered; the sequence is SDEVAGGAAVAEQHQHNPEGGGEQQL.

The protein belongs to the PP2C family. It depends on Mg(2+) as a cofactor. Mn(2+) serves as cofactor.

The catalysed reaction is O-phospho-L-seryl-[protein] + H2O = L-seryl-[protein] + phosphate. The enzyme catalyses O-phospho-L-threonyl-[protein] + H2O = L-threonyl-[protein] + phosphate. The sequence is that of Putative protein phosphatase 2C 22 from Oryza sativa subsp. japonica (Rice).